We begin with the raw amino-acid sequence, 62 residues long: Large ribosomal subunit protein bL28 (62 aa).

This sequence belongs to the bacterial ribosomal protein bL28 family.

This Caldanaerobacter subterraneus subsp. tengcongensis (strain DSM 15242 / JCM 11007 / NBRC 100824 / MB4) (Thermoanaerobacter tengcongensis) protein is Large ribosomal subunit protein bL28.